We begin with the raw amino-acid sequence, 200 residues long: Recombination protein RecR (200 aa).

Residues 57-72 (CRQCRTLTEDDLCPQC) form a C4-type zinc finger. In terms of domain architecture, Toprim spans 80-175 (TLLCVVEGPM…IASRIAHGVP (96 aa)).

It belongs to the RecR family.

In terms of biological role, may play a role in DNA repair. It seems to be involved in an RecBC-independent recombinational process of DNA repair. It may act with RecF and RecO. This is Recombination protein RecR from Pseudomonas fluorescens (strain Pf0-1).